Reading from the N-terminus, the 356-residue chain is Phosphoribosyl pyrophosphate synthase-associated protein 1 (356 aa).

An N-acetylmethionine modification is found at methionine 1. The residue at position 2 (asparagine 2) is an N-acetylproline. 2 positions are modified to phosphoserine: serine 177 and serine 215.

Belongs to the ribose-phosphate pyrophosphokinase family. As to quaternary structure, binds to PRPS1 and PRPS2. In terms of tissue distribution, ubiquitous.

Its function is as follows. Seems to play a negative regulatory role in 5-phosphoribose 1-diphosphate synthesis. In Homo sapiens (Human), this protein is Phosphoribosyl pyrophosphate synthase-associated protein 1 (PRPSAP1).